A 294-amino-acid polypeptide reads, in one-letter code: Bifunctional protein FolD (294 aa).

NADP(+) contacts are provided by residues 166-168, Ser191, and Ile232; that span reads GRS.

This sequence belongs to the tetrahydrofolate dehydrogenase/cyclohydrolase family. In terms of assembly, homodimer.

The enzyme catalyses (6R)-5,10-methylene-5,6,7,8-tetrahydrofolate + NADP(+) = (6R)-5,10-methenyltetrahydrofolate + NADPH. It catalyses the reaction (6R)-5,10-methenyltetrahydrofolate + H2O = (6R)-10-formyltetrahydrofolate + H(+). It functions in the pathway one-carbon metabolism; tetrahydrofolate interconversion. In terms of biological role, catalyzes the oxidation of 5,10-methylenetetrahydrofolate to 5,10-methenyltetrahydrofolate and then the hydrolysis of 5,10-methenyltetrahydrofolate to 10-formyltetrahydrofolate. This is Bifunctional protein FolD from Nitrobacter winogradskyi (strain ATCC 25391 / DSM 10237 / CIP 104748 / NCIMB 11846 / Nb-255).